Consider the following 616-residue polypeptide: Chaperone protein HscA (616 aa).

Belongs to the heat shock protein 70 family.

Chaperone involved in the maturation of iron-sulfur cluster-containing proteins. Has a low intrinsic ATPase activity which is markedly stimulated by HscB. Involved in the maturation of IscU. The sequence is that of Chaperone protein HscA from Salmonella paratyphi C (strain RKS4594).